Here is a 109-residue protein sequence, read N- to C-terminus: Co-chaperonin GroES (109 aa).

The protein belongs to the GroES chaperonin family. Heptamer of 7 subunits arranged in a ring. Interacts with the chaperonin GroEL.

The protein localises to the cytoplasm. Together with the chaperonin GroEL, plays an essential role in assisting protein folding. The GroEL-GroES system forms a nano-cage that allows encapsulation of the non-native substrate proteins and provides a physical environment optimized to promote and accelerate protein folding. GroES binds to the apical surface of the GroEL ring, thereby capping the opening of the GroEL channel. The sequence is that of Co-chaperonin GroES from Methanosarcina acetivorans (strain ATCC 35395 / DSM 2834 / JCM 12185 / C2A).